Here is a 701-residue protein sequence, read N- to C-terminus: Elongation factor G (701 aa).

Positions N11–L287 constitute a tr-type G domain. Residues A20–T27, D84–H88, and N138–D141 contribute to the GTP site.

This sequence belongs to the TRAFAC class translation factor GTPase superfamily. Classic translation factor GTPase family. EF-G/EF-2 subfamily.

Its subcellular location is the cytoplasm. Catalyzes the GTP-dependent ribosomal translocation step during translation elongation. During this step, the ribosome changes from the pre-translocational (PRE) to the post-translocational (POST) state as the newly formed A-site-bound peptidyl-tRNA and P-site-bound deacylated tRNA move to the P and E sites, respectively. Catalyzes the coordinated movement of the two tRNA molecules, the mRNA and conformational changes in the ribosome. In Mycobacterium sp. (strain JLS), this protein is Elongation factor G.